Here is a 454-residue protein sequence, read N- to C-terminus: Bifunctional protein GlmU (454 aa).

The interval 1–226 is pyrophosphorylase; it reads MLAVAVLAAG…PDEVNGINNR (226 aa). Residues 7 to 10, Lys21, Gln73, and 78 to 79 contribute to the UDP-N-acetyl-alpha-D-glucosamine site; these read LAAG and GT. Mg(2+) is bound at residue Asp103. Residues Gly140, Glu155, Asn170, and Asn224 each contribute to the UDP-N-acetyl-alpha-D-glucosamine site. Asn224 contributes to the Mg(2+) binding site. The linker stretch occupies residues 227 to 247; sequence RQLAQCEGVLQQRLRDHWMDE. Positions 248-454 are N-acetyltransferase; sequence GVTFVDPASC…WDRNTQAAQS (207 aa). UDP-N-acetyl-alpha-D-glucosamine contacts are provided by Arg329 and Lys347. Catalysis depends on His359, which acts as the Proton acceptor. UDP-N-acetyl-alpha-D-glucosamine-binding residues include Tyr362 and Asn373. Residues Ala376, Ala419, and Arg436 each contribute to the acetyl-CoA site.

It in the N-terminal section; belongs to the N-acetylglucosamine-1-phosphate uridyltransferase family. This sequence in the C-terminal section; belongs to the transferase hexapeptide repeat family. In terms of assembly, homotrimer. Requires Mg(2+) as cofactor.

Its subcellular location is the cytoplasm. It carries out the reaction alpha-D-glucosamine 1-phosphate + acetyl-CoA = N-acetyl-alpha-D-glucosamine 1-phosphate + CoA + H(+). The catalysed reaction is N-acetyl-alpha-D-glucosamine 1-phosphate + UTP + H(+) = UDP-N-acetyl-alpha-D-glucosamine + diphosphate. Its pathway is nucleotide-sugar biosynthesis; UDP-N-acetyl-alpha-D-glucosamine biosynthesis; N-acetyl-alpha-D-glucosamine 1-phosphate from alpha-D-glucosamine 6-phosphate (route II): step 2/2. It participates in nucleotide-sugar biosynthesis; UDP-N-acetyl-alpha-D-glucosamine biosynthesis; UDP-N-acetyl-alpha-D-glucosamine from N-acetyl-alpha-D-glucosamine 1-phosphate: step 1/1. The protein operates within bacterial outer membrane biogenesis; LPS lipid A biosynthesis. In terms of biological role, catalyzes the last two sequential reactions in the de novo biosynthetic pathway for UDP-N-acetylglucosamine (UDP-GlcNAc). The C-terminal domain catalyzes the transfer of acetyl group from acetyl coenzyme A to glucosamine-1-phosphate (GlcN-1-P) to produce N-acetylglucosamine-1-phosphate (GlcNAc-1-P), which is converted into UDP-GlcNAc by the transfer of uridine 5-monophosphate (from uridine 5-triphosphate), a reaction catalyzed by the N-terminal domain. The sequence is that of Bifunctional protein GlmU from Synechococcus sp. (strain CC9311).